The primary structure comprises 207 residues: Outer-membrane lipoprotein LolB (207 aa).

The N-terminal stretch at 1-21 (MPTKTVRCLRLLPLASLLLAA) is a signal peptide. The N-palmitoyl cysteine moiety is linked to residue cysteine 22. Residue cysteine 22 is the site of S-diacylglycerol cysteine attachment.

The protein belongs to the LolB family. Monomer.

It localises to the cell outer membrane. Plays a critical role in the incorporation of lipoproteins in the outer membrane after they are released by the LolA protein. This is Outer-membrane lipoprotein LolB from Pectobacterium atrosepticum (strain SCRI 1043 / ATCC BAA-672) (Erwinia carotovora subsp. atroseptica).